A 224-amino-acid polypeptide reads, in one-letter code: 7-cyano-7-deazaguanine synthase (224 aa).

Position 12 to 22 (12 to 22 (LSGGLDSSTVT)) interacts with ATP. The Zn(2+) site is built by Cys-193, Cys-201, Cys-204, and Cys-207.

This sequence belongs to the QueC family. Zn(2+) serves as cofactor.

It catalyses the reaction 7-carboxy-7-deazaguanine + NH4(+) + ATP = 7-cyano-7-deazaguanine + ADP + phosphate + H2O + H(+). The protein operates within purine metabolism; 7-cyano-7-deazaguanine biosynthesis. Catalyzes the ATP-dependent conversion of 7-carboxy-7-deazaguanine (CDG) to 7-cyano-7-deazaguanine (preQ(0)). In Prochlorococcus marinus (strain MIT 9312), this protein is 7-cyano-7-deazaguanine synthase.